The following is a 194-amino-acid chain: Leucyl/phenylalanyl-tRNA--protein transferase (194 aa).

This sequence belongs to the L/F-transferase family.

Its subcellular location is the cytoplasm. The enzyme catalyses N-terminal L-lysyl-[protein] + L-leucyl-tRNA(Leu) = N-terminal L-leucyl-L-lysyl-[protein] + tRNA(Leu) + H(+). It catalyses the reaction N-terminal L-arginyl-[protein] + L-leucyl-tRNA(Leu) = N-terminal L-leucyl-L-arginyl-[protein] + tRNA(Leu) + H(+). The catalysed reaction is L-phenylalanyl-tRNA(Phe) + an N-terminal L-alpha-aminoacyl-[protein] = an N-terminal L-phenylalanyl-L-alpha-aminoacyl-[protein] + tRNA(Phe). Functionally, functions in the N-end rule pathway of protein degradation where it conjugates Leu, Phe and, less efficiently, Met from aminoacyl-tRNAs to the N-termini of proteins containing an N-terminal arginine or lysine. This chain is Leucyl/phenylalanyl-tRNA--protein transferase, found in Chlorobaculum parvum (strain DSM 263 / NCIMB 8327) (Chlorobium vibrioforme subsp. thiosulfatophilum).